A 779-amino-acid polypeptide reads, in one-letter code: Transcription activator of gluconeogenesis BDCG_02812 (779 aa).

A disordered region spans residues 1 to 70; that stretch reads MTASTRNGSP…NAKDPLRPRR (70 aa). Residues 25 to 61 show a composition bias toward polar residues; that stretch reads KSMTTTPANPPETKSQTNGKGSGTAQSSQKPASTSAN. A DNA-binding region (zn(2)-C6 fungal-type) is located at residues 77–105; the sequence is CFACQRAHLTCGDERPCQRCIKRGLQDAC. Disordered stretches follow at residues 135–163, 202–239, 285–344, 401–421, 559–590, and 655–732; these read QANT…QSVS, SVFH…SVSG, GAGD…ANPR, TNLM…PGLK, GSSL…PHTG, and FHGK…QTWG. The segment covering 202-226 has biased composition (polar residues); that stretch reads SVFHAQSPSSTQNFDLSSNPQTQNL. Low complexity predominate over residues 227–238; the sequence is SSAMSQTASSVS. Composition is skewed to polar residues over residues 291–322, 333–344, and 401–416; these read PSDS…NQSP, WNPTGQGQANPR, and TNLM…SRIS. A compositionally biased stretch (low complexity) spans 560–572; that stretch reads SSLSSASSVRGSS. Residues 573-586 show a composition bias toward polar residues; sequence TFTPRNNNTHNSID. Residues 672–719 show a composition bias toward low complexity; it reads TGTTTSGDVATTTATGTSTSNGANANTNGNNTNPNDPSSAASSSASSA. Positions 720 to 729 are enriched in polar residues; the sequence is LQGPQQSPRQ.

It belongs to the ERT1/acuK family.

It localises to the nucleus. Transcription factor which regulates nonfermentable carbon utilization. Activator of gluconeogenetic genes. The chain is Transcription activator of gluconeogenesis BDCG_02812 from Ajellomyces dermatitidis (strain ER-3 / ATCC MYA-2586) (Blastomyces dermatitidis).